The sequence spans 79 residues: Putative membrane protein insertion efficiency factor (79 aa).

This sequence belongs to the UPF0161 family.

It is found in the cell inner membrane. In terms of biological role, could be involved in insertion of integral membrane proteins into the membrane. The protein is Putative membrane protein insertion efficiency factor of Prochlorococcus marinus (strain SARG / CCMP1375 / SS120).